The following is a 442-amino-acid chain: N-acetyl-S-alkylcysteine sulfoxide monooxygenase (442 aa).

Residues Asp-58, Thr-95, His-145, Tyr-149, Ser-219, and Ser-220 each coordinate FMN.

The protein belongs to the NtaA/SnaA/DszA monooxygenase family. In terms of assembly, homodimer.

The enzyme catalyses (R)-N-acetyl-S-benzyl-L-cysteine sulfoxide + FMNH2 + O2 = N-acetyl-S-hydroxy-L-cysteine + benzaldehyde + FMN + H2O + H(+). It functions in the pathway amino-acid metabolism. Functionally, involved in a cysteine salvage pathway from S-alkylcysteine. Catalyzes the C-S bond cleavage in N-acetyl-S-benzyl-L-cysteine sulfoxide leading to N-acetyl-S-hydroxy-L-cysteine and benzaldehyde. This pathway is likely important in the catabolism of alkylated cysteine generated by proteolysis of alkylated glutathione formed in the detoxification of a wide range of electrophiles. Has much less efficient activity with N-acetyl-S-methyl-L-cysteine sulfoxide as substrate. Cannot use S-alkylated L-cysteine sulfones and ketone analogs as substrates, demonstrating that the sulfoxide is required for activity. The protein is N-acetyl-S-alkylcysteine sulfoxide monooxygenase of Bacillus subtilis (strain 168).